Reading from the N-terminus, the 803-residue chain is Phosphoribosylformylglycinamidine synthase subunit PurL (803 aa).

The active site involves H65. The ATP site is built by Y68 and K107. E109 contacts Mg(2+). Substrate contacts are provided by residues 110–113 (SHNH) and R132. H111 serves as the catalytic Proton acceptor. Residue D133 participates in Mg(2+) binding. Residue Q256 coordinates substrate. D284 contacts Mg(2+). 328–330 (ESQ) serves as a coordination point for substrate. The ATP site is built by N537 and G574. Residue N575 participates in Mg(2+) binding. A substrate-binding site is contributed by S577.

This sequence belongs to the FGAMS family. Monomer. Part of the FGAM synthase complex composed of 1 PurL, 1 PurQ and 2 PurS subunits.

It is found in the cytoplasm. It carries out the reaction N(2)-formyl-N(1)-(5-phospho-beta-D-ribosyl)glycinamide + L-glutamine + ATP + H2O = 2-formamido-N(1)-(5-O-phospho-beta-D-ribosyl)acetamidine + L-glutamate + ADP + phosphate + H(+). The protein operates within purine metabolism; IMP biosynthesis via de novo pathway; 5-amino-1-(5-phospho-D-ribosyl)imidazole from N(2)-formyl-N(1)-(5-phospho-D-ribosyl)glycinamide: step 1/2. Part of the phosphoribosylformylglycinamidine synthase complex involved in the purines biosynthetic pathway. Catalyzes the ATP-dependent conversion of formylglycinamide ribonucleotide (FGAR) and glutamine to yield formylglycinamidine ribonucleotide (FGAM) and glutamate. The FGAM synthase complex is composed of three subunits. PurQ produces an ammonia molecule by converting glutamine to glutamate. PurL transfers the ammonia molecule to FGAR to form FGAM in an ATP-dependent manner. PurS interacts with PurQ and PurL and is thought to assist in the transfer of the ammonia molecule from PurQ to PurL. The polypeptide is Phosphoribosylformylglycinamidine synthase subunit PurL (Prochlorococcus marinus (strain NATL1A)).